We begin with the raw amino-acid sequence, 609 residues long: Putative pectinesterase/pectinesterase inhibitor 45 (609 aa).

Residues 25–45 (IILGVVSVLVVAAAIIGGAFA) form a helical membrane-spanning segment. 10 N-linked (GlcNAc...) asparagine glycosylation sites follow: Asn51, Asn62, Asn100, Asn114, Asn183, Asn229, Asn296, Asn306, Asn346, and Asn362. The interval 54 to 87 (QEQGKTTNNKSKDSPTKSESPSPKPPSSAAQTVK) is disordered. A pectinesterase inhibitor 45 region spans residues 89–241 (GQVDKIIQTL…QVLTSNSLAM (153 aa)). Positions 296–593 (NATVAKDGSG…FTVGPFLQGE (298 aa)) are pectinesterase 45. Substrate is bound by residues Thr371 and Gln401. Asp424 serves as the catalytic Proton donor; for pectinesterase activity. Cys438 and Cys458 are joined by a disulfide. The active-site Nucleophile; for pectinesterase activity is the Asp445. An N-linked (GlcNAc...) asparagine glycan is attached at Asn491. Residues Arg513 and Trp515 each contribute to the substrate site.

In the N-terminal section; belongs to the PMEI family. This sequence in the C-terminal section; belongs to the pectinesterase family. As to expression, expressed in flower buds and pollen.

The protein resides in the membrane. The catalysed reaction is [(1-&gt;4)-alpha-D-galacturonosyl methyl ester](n) + n H2O = [(1-&gt;4)-alpha-D-galacturonosyl](n) + n methanol + n H(+). It functions in the pathway glycan metabolism; pectin degradation; 2-dehydro-3-deoxy-D-gluconate from pectin: step 1/5. Acts in the modification of cell walls via demethylesterification of cell wall pectin. In Arabidopsis thaliana (Mouse-ear cress), this protein is Putative pectinesterase/pectinesterase inhibitor 45 (PME45).